Consider the following 316-residue polypeptide: MTNEFHHVTVLLHEAVDMLDIKPDGIYVDATLGGSGHSAYLLSLLGDKGHLYCFDQDQKAIDHAQEQLKPYIDKGQVTFIKDNFRHLKVRLLEHGVTEIDGILYDLGVSSPQLDERERGFSYKQDAPLDMRMDSQAALTAYEVVNTYDFNDLVRIFFKYGEDKFSKQIARKIEQARAIKPISTTTELAALIKSAKPAKELKKKGHPAKQIFQAIRIEVNDELGAADASIQQAIELLALDGRISVITFHSLEDRLTKHLFKEASTADAPKGLPFIPDELKPKLELVSRKPILPSQKELMANNRAHSAKLRVARKVRK.

Residues 35–37, Asp-55, Phe-84, Asp-105, and Gln-112 each bind S-adenosyl-L-methionine; that span reads SGH.

This sequence belongs to the methyltransferase superfamily. RsmH family.

It is found in the cytoplasm. It catalyses the reaction cytidine(1402) in 16S rRNA + S-adenosyl-L-methionine = N(4)-methylcytidine(1402) in 16S rRNA + S-adenosyl-L-homocysteine + H(+). In terms of biological role, specifically methylates the N4 position of cytidine in position 1402 (C1402) of 16S rRNA. In Streptococcus equi subsp. zooepidemicus (strain H70), this protein is Ribosomal RNA small subunit methyltransferase H.